A 478-amino-acid chain; its full sequence is MMASDRVRKRHKGSANGAQTVEKEPSKEPAQWGRAWEVDWFSLSGVILLLCFAPFLVSFFIMACDQYQCSISHPLLDLYNGDATLFTIWNRAPSFTWAAAKIYAIWVTFQVVLYMCVPDFLHKILPGYVGGVQDGARTPAGLINKYEVNGLQCWLITHVLWVLNAQHFHWFSPTIIIDNWIPLLWCTNILGYAVSTFAFIKAYLFPTNPEDCKFTGNMFYNYMMGIEFNPRIGKWFDFKLFFNGRPGIVAWTLINLSYAAKQQELYGYVTNSMILVNVLQAVYVVDFFWNEAWYLKTIDICHDHFGWYLGWGDCVWLPFLYTLQGLYLVYNPIQLSTPHAAGVLILGLVGYYIFRVTNHQKDLFRRTEGNCSIWGKKPTFIECSYQSADGAIHKSKLMTSGFWGVARHMNYTGDLMGSLAYCLACGGNHLLPYFYIIYMTILLVHRCIRDEHRCSNKYGKDWERYTAAVSYRLLPNIF.

The tract at residues 1–28 (MMASDRVRKRHKGSANGAQTVEKEPSKE) is disordered. A run of 6 helical transmembrane segments spans residues 43–63 (LSGV…FIMA), 97–117 (WAAA…YMCV), 180–200 (WIPL…FAFI), 269–289 (VTNS…DFFW), 309–329 (LGWG…LYLV), and 333–353 (IQLS…GYYI). NADP(+) contacts are provided by residues K361, R365, M398, W403, and 410–411 (NY). The helical transmembrane segment at 424 to 444 (ACGGNHLLPYFYIIYMTILLV) threads the bilayer. NADP(+)-binding positions include D450, 454–458 (CSNKY), and Y465.

Belongs to the ERG4/ERG24 family.

The protein localises to the endoplasmic reticulum membrane. The catalysed reaction is cholesterol + NADP(+) = 7-dehydrocholesterol + NADPH + H(+). The enzyme catalyses 7-dehydrodesmosterol + NADPH + H(+) = desmosterol + NADP(+). It functions in the pathway steroid biosynthesis; cholesterol biosynthesis. Catalyzes the last step of the cholesterol synthesis pathway, which transforms cholesta-5,7-dien-3beta-ol (7-dehydrocholesterol,7-DHC) into cholesterol by reducing the C7-C8 double bond of its sterol core. Can also metabolize cholesta-5,7,24-trien-3beta-ol (7-dehydrodemosterol, 7-DHD) to desmosterol, which is then metabolized by the Delta(24)-sterol reductase (DHCR24) to cholesterol. Modulates ferroptosis (a form of regulated cell death driven by iron-dependent lipid peroxidation) through the metabolic breakdown of the anti-ferroptotic metabolites 7-DHC and 7-DHD which, when accumulated, divert the propagation of peroxyl radical-mediated damage from phospholipid components to its sterol core, protecting plasma and mitochondrial membranes from phospholipid autoxidation. In Danio rerio (Zebrafish), this protein is 7-dehydrocholesterol reductase (dhcr7).